The primary structure comprises 348 residues: Tetraacyldisaccharide 4'-kinase (348 aa).

Residue 50–57 coordinates ATP; that stretch reads TMGGTGKT.

Belongs to the LpxK family.

The enzyme catalyses a lipid A disaccharide + ATP = a lipid IVA + ADP + H(+). The protein operates within glycolipid biosynthesis; lipid IV(A) biosynthesis; lipid IV(A) from (3R)-3-hydroxytetradecanoyl-[acyl-carrier-protein] and UDP-N-acetyl-alpha-D-glucosamine: step 6/6. Its function is as follows. Transfers the gamma-phosphate of ATP to the 4'-position of a tetraacyldisaccharide 1-phosphate intermediate (termed DS-1-P) to form tetraacyldisaccharide 1,4'-bis-phosphate (lipid IVA). The protein is Tetraacyldisaccharide 4'-kinase of Desulfotalea psychrophila (strain LSv54 / DSM 12343).